The sequence spans 67 residues: Protein AaeX (67 aa).

2 helical membrane passes run 3–23 (LFPV…KLLL) and 43–63 (FVWH…YLIS).

Belongs to the AaeX family.

It localises to the cell membrane. This is Protein AaeX from Salmonella gallinarum (strain 287/91 / NCTC 13346).